The primary structure comprises 2027 residues: Dedicator of cytokinesis protein 3 (2027 aa).

Residues 6–67 (EEEKYGVVIC…PANYIHLKKA (62 aa)) form the SH3 domain. The C2 DOCK-type domain occupies 421 to 598 (RNDLYLTLEK…ESFFISTQLS (178 aa)). The DOCKER domain occupies 1225-1632 (KSEINKEEMY…LYHEFPGLDK (408 aa)). Ser1655 carries the phosphoserine modification. Disordered stretches follow at residues 1672–1695 (GTGR…MMMM), 1731–1768 (SSSQ…SLPD), 1846–1925 (DTPP…DEGL), and 1971–2027 (PPKP…RGEQ). Composition is skewed to low complexity over residues 1676 to 1695 (HSSS…MMMM) and 1731 to 1751 (SSSQ…APSQ). A compositionally biased stretch (polar residues) spans 1752–1763 (MITSAPSSTRGS). Positions 1877–1899 (GSNSTLSGSASSGVSSLSESNFG) are enriched in low complexity. An SH3-binding motif is present at residues 1967-1973 (PPALPPK). Basic and acidic residues-rich tracts occupy residues 1981–1998 (ALEH…ERPR) and 2011–2027 (VKEE…RGEQ).

The protein belongs to the DOCK family. In terms of assembly, interacts with presenilin proteins PSEN1 and PSEN2. Interacts with CRK. In terms of tissue distribution, expressed in brain, spinal cord, pituitary gland, testis. Not expressed in heart, liver, kidney, spleen and lung. In brain, it is highly expressed in the cerebral cortex and hippocampus, while it is absent in other tissues, except in spinal cord. In the cerebral cortex, it is found within the intermediate (III and IV) and deep (V and VI) layers, whereas it is weakly expressed in superficial layer I. It is also abundant in the piriform cortex. Within the hippocampus, it is expressed in the pyramidal neurons of the CA1, CA2, and CA3 regions and the dentate gyrus.

It localises to the cytoplasm. Its function is as follows. Potential guanine nucleotide exchange factor (GEF). GEF proteins activate some small GTPases by exchanging bound GDP for free GTP. Its interaction with presenilin proteins as well as its ability to stimulate Tau/MAPT phosphorylation suggest that it may be involved in Alzheimer disease. Ectopic expression in nerve cells decreases the secretion of amyloid-beta APBA1 protein and lowers the rate of cell-substratum adhesion, suggesting that it may affect the function of some small GTPase involved in the regulation of actin cytoskeleton or cell adhesion receptors. This chain is Dedicator of cytokinesis protein 3 (Dock3), found in Mus musculus (Mouse).